The chain runs to 333 residues: UDP-N-acetylglucosamine 4,6-dehydratase (inverting) (333 aa).

NADP(+)-binding positions include 19–22 (TGSF), 43–48 (SRDELK), 67–68 (DV), alanine 87, lysine 91, and 129–130 (LS). Lysine 91 lines the substrate pocket. Lysine 133 is an active-site residue. 2 residues coordinate NADP(+): tyrosine 141 and lysine 145. Asparagine 173 is a substrate binding site. Residue 174 to 178 (VVGSR) participates in NADP(+) binding. Residues valine 181, threonine 199, arginine 258, and glutamate 261 each contribute to the substrate site.

It belongs to the polysaccharide synthase family. Homohexamer. Requires NADP(+) as cofactor.

It catalyses the reaction UDP-N-acetyl-alpha-D-glucosamine = UDP-2-acetamido-2,6-dideoxy-beta-L-arabino-hex-4-ulose + H2O. In terms of biological role, catalyzes the first step in the biosynthesis of pseudaminic acid, a sialic-acid-like sugar that is used to modify flagellin. Has both C6 dehydratase and C5 epimerase activities that result in the production of both UDP-2-acetamido-2,6-dideoxy-beta-L-arabino-4-hexulose and UDP-2-acetamido-2,6-dideoxy-alpha-D-xylo-4-hexulose. This chain is UDP-N-acetylglucosamine 4,6-dehydratase (inverting) (pseB), found in Helicobacter pylori (strain ATCC 700392 / 26695) (Campylobacter pylori).